The following is a 677-amino-acid chain: UvrABC system protein B (677 aa).

The Helicase ATP-binding domain occupies glutamine 25–arginine 412. Glycine 38–threonine 45 is an ATP binding site. A Beta-hairpin motif is present at residues tyrosine 91 to isoleucine 114. Residues glutamine 429 to alanine 591 form the Helicase C-terminal domain. Residues proline 639 to lysine 674 enclose the UVR domain.

The protein belongs to the UvrB family. Forms a heterotetramer with UvrA during the search for lesions. Interacts with UvrC in an incision complex.

The protein resides in the cytoplasm. Its function is as follows. The UvrABC repair system catalyzes the recognition and processing of DNA lesions. A damage recognition complex composed of 2 UvrA and 2 UvrB subunits scans DNA for abnormalities. Upon binding of the UvrA(2)B(2) complex to a putative damaged site, the DNA wraps around one UvrB monomer. DNA wrap is dependent on ATP binding by UvrB and probably causes local melting of the DNA helix, facilitating insertion of UvrB beta-hairpin between the DNA strands. Then UvrB probes one DNA strand for the presence of a lesion. If a lesion is found the UvrA subunits dissociate and the UvrB-DNA preincision complex is formed. This complex is subsequently bound by UvrC and the second UvrB is released. If no lesion is found, the DNA wraps around the other UvrB subunit that will check the other stand for damage. This Parasynechococcus marenigrum (strain WH8102) protein is UvrABC system protein B.